Reading from the N-terminus, the 1543-residue chain is ABC multidrug transporter AFR1 (1543 aa).

Residues 1-85 (MSAAGVPAEL…DGKQKRLPAD (85 aa)) form a disordered region. The segment covering 18–41 (TATTQNPSGLANSQVTSGPVSSAT) has biased composition (polar residues). Basic and acidic residues predominate over residues 62–83 (AVEAEKAEAIDAAGDGKQKRLP). The N-linked (GlcNAc...) asparagine glycan is linked to Asn117. Residues 119–157 (SQRSQHELHRPTTRHSVRSSFSRKDRVVSRLTQDDAEKA) are disordered. Over residues 140–157 (SRKDRVVSRLTQDDAEKA) the composition is skewed to basic and acidic residues. 2 N-linked (GlcNAc...) asparagine glycosylation sites follow: Asn208 and Asn398. Positions 222–474 (IKVLGIFGFN…MIGLGYRDLP (253 aa)) constitute an ABC transporter 1 domain. 5 helical membrane passes run 585-605 (FGIS…GSVY), 619-639 (GGLL…ELPS), 670-690 (VPYN…MGGL), 695-715 (GAFF…SAFF), and 727-747 (VAAR…GYMI). A glycan (N-linked (GlcNAc...) asparagine) is linked at Asn823. The chain crosses the membrane as a helical span at residues 845 to 865 (FGILLGFFTFFMFLQMLFIEV). In terms of domain architecture, ABC transporter 2 spans 918–1160 (FTWEGLSYTV…VLIDYLERNG (243 aa)). 954-961 (GASGAGKT) contributes to the ATP binding site. Asn1223 carries an N-linked (GlcNAc...) asparagine glycan. The next 6 membrane-spanning stretches (helical) occupy residues 1254-1274 (WTRL…FLQL), 1285-1305 (VFAI…IEPQ), 1336-1356 (MPYS…GVGF), 1366-1386 (FFLM…AVAA), 1391-1411 (ILIA…FCGV), and 1517-1537 (FGIF…AARF).

Belongs to the ABC transporter superfamily. ABCG family. PDR (TC 3.A.1.205) subfamily.

The protein resides in the cell membrane. The enzyme catalyses itraconazole(in) + ATP + H2O = itraconazole(out) + ADP + phosphate + H(+). The catalysed reaction is voriconazole(in) + ATP + H2O = voriconazole(out) + ADP + phosphate + H(+). It carries out the reaction fluconazole(in) + ATP + H2O = fluconazole(out) + ADP + phosphate + H(+). In terms of biological role, major pleiotropic ABC efflux transporter that confers resistance to structurally and functionally unrelated compounds including azoles such as fluconazole (FLC), itraconazole (ITC), posaconazole (POS), and voriconazole (VRC). Is also able to efflux the eukaryote protein synthesis inhibitor cycloheximide (CHX). The chain is ABC multidrug transporter AFR1 from Cryptococcus neoformans var. grubii serotype A (strain H99 / ATCC 208821 / CBS 10515 / FGSC 9487) (Filobasidiella neoformans var. grubii).